A 344-amino-acid chain; its full sequence is tRNA N6-adenosine threonylcarbamoyltransferase (344 aa).

Residues histidine 114 and histidine 118 each contribute to the Fe cation site. Residues 136–140, aspartate 170, glycine 183, aspartate 187, and asparagine 278 each bind substrate; that span reads LVSGG. Aspartate 306 contacts Fe cation.

It belongs to the KAE1 / TsaD family. The cofactor is Fe(2+).

It is found in the cytoplasm. It carries out the reaction L-threonylcarbamoyladenylate + adenosine(37) in tRNA = N(6)-L-threonylcarbamoyladenosine(37) in tRNA + AMP + H(+). Required for the formation of a threonylcarbamoyl group on adenosine at position 37 (t(6)A37) in tRNAs that read codons beginning with adenine. Is involved in the transfer of the threonylcarbamoyl moiety of threonylcarbamoyl-AMP (TC-AMP) to the N6 group of A37, together with TsaE and TsaB. TsaD likely plays a direct catalytic role in this reaction. This is tRNA N6-adenosine threonylcarbamoyltransferase from Mycobacteroides abscessus (strain ATCC 19977 / DSM 44196 / CCUG 20993 / CIP 104536 / JCM 13569 / NCTC 13031 / TMC 1543 / L948) (Mycobacterium abscessus).